A 410-amino-acid chain; its full sequence is MPHSTNKELIFGIMVGTAGISLLLLWYHKVRKPEKTMKLPKFLSLDNTFNSITLQDEVHNDQGTTVIFQERQLQILEKLNELLTNMEELKEEIRFLKETVPKLEEYIQDELGGKITVHKVSPQHRARKRRLPTIQSSATSNSSEEAESEGGYITANTDTEEQSFPVPKAFNTHVEELNLDVLLQKVDHLRMSESGKSESFELLCDHKEKFRDKIEFMWRFARAYGDMYELSTNTQEKKHYANIGRTLSERAINRAPMNGHCHLWYAVLCGYVSEFEGLQNKINYGHLFKEHLDIAIKLLPEEPFLYYLKGRYCYTVSKLSWIEKKMAATLFGKIPSSTVQEALHNFLKAEELCPGYSNPNYMYLAKCYADLEENQNALKFCNLALLLPTVTKEDKEAQKEMQKIMTSLKR.

Residues 10-27 form a helical membrane-spanning segment; the sequence is IFGIMVGTAGISLLLLWY. Ser51 carries the post-translational modification Phosphoserine. Residues 68–110 are a coiled coil; the sequence is FQERQLQILEKLNELLTNMEELKEEIRFLKETVPKLEEYIQDE. Ser121 is subject to Phosphoserine. Over residues 122–131 the composition is skewed to basic residues; the sequence is PQHRARKRRL. A disordered region spans residues 122 to 151; it reads PQHRARKRRLPTIQSSATSNSSEEAESEGG. Thr139 carries the post-translational modification Phosphothreonine. Tyr152 is subject to Phosphotyrosine. Phosphothreonine is present on residues Thr154 and Thr157.

This sequence belongs to the RMDN family. As to quaternary structure, interacts with microtubules.

It is found in the membrane. The protein localises to the cytoplasm. It localises to the cytoskeleton. Its subcellular location is the spindle. The protein resides in the spindle pole. This chain is Regulator of microtubule dynamics protein 2 (RMDN2), found in Macaca fascicularis (Crab-eating macaque).